A 107-amino-acid chain; its full sequence is uncharacterized protein (107 aa).

The helical transmembrane segment at 62–79 threads the bilayer; the sequence is LLVVIVYYFSHVGSFSLA.

The protein resides in the nucleus membrane. This is an uncharacterized protein from Schizosaccharomyces pombe (strain 972 / ATCC 24843) (Fission yeast).